A 72-amino-acid polypeptide reads, in one-letter code: Conotoxin Vc6.16 (72 aa).

The N-terminal stretch at 1-19 (MQKLIILLLVAAVLMSTQA) is a signal peptide. Positions 20 to 44 (LFQEKRPKEKIDLLSKRKTDAEKQQ) are excised as a propeptide. 3 disulfide bridges follow: Cys48–Cys62, Cys55–Cys66, and Cys61–Cys71.

The protein belongs to the conotoxin O2 superfamily. In terms of tissue distribution, expressed by the venom duct.

Its subcellular location is the secreted. Inhibits voltage-gated ion channels. This is Conotoxin Vc6.16 from Conus victoriae (Queen Victoria cone).